A 344-amino-acid polypeptide reads, in one-letter code: Transcription factor AIG1 (344 aa).

Residues 131–180 (AASKSHSEAERRRRERINTHLAKLRSILPNTTKTDKASLLAEVIQHMKEL) enclose the bHLH domain. A disordered region spans residues 313-344 (NDESNDNNNLEKSSSGGIKRQRTSKMVNRCYN). Positions 318-327 (DNNNLEKSSS) are enriched in low complexity.

Homodimer. Interacts with LHW.

It is found in the nucleus. Its function is as follows. Transcription factor required for MONOPTEROS-dependent root initiation in embryo. Transcriptionally controlled by MONOPTEROS. This is Transcription factor AIG1 (BHLH32) from Arabidopsis thaliana (Mouse-ear cress).